The following is a 418-amino-acid chain: Vasopressin V1a receptor (418 aa).

Low complexity predominate over residues 1–15 (MRFSGSPSPGPSNSS). Residues 1–20 (MRFSGSPSPGPSNSSRWWPL) form a disordered region. Over 1-51 (MRFSGSPSPGPSNSSRWWPLDAGDANTSGDLAGLGEDGGPQADTRNEELAK) the chain is Extracellular. Asn-13 and Asn-26 each carry an N-linked (GlcNAc...) asparagine glycan. Residues 52-75 (LEIAVLAVIFVVAVLGNSSVLLAL) traverse the membrane as a helical segment. The Cytoplasmic segment spans residues 76 to 87 (HRTPRKTSRMHL). The chain crosses the membrane as a helical span at residues 88 to 109 (FIRHLSLADLAVAFFQVLPQLG). The Extracellular segment spans residues 110–124 (WDITYRFRGPDGLCR). Cys-123 and Cys-202 are oxidised to a cystine. Residues 125-146 (VVKHMQVFAMFASAYMLVVMTA) traverse the membrane as a helical segment. At 147–167 (DRYIAVCHPLKTLQQPARRSR) the chain is on the cytoplasmic side. The chain crosses the membrane as a helical span at residues 168 to 189 (LMIAAAWVLSFVLSTPQYFVFS). The Extracellular portion of the chain corresponds to 190-217 (MVEVSNVTKTYDCWANFIHPWGLPAYVT). N-linked (GlcNAc...) asparagine glycosylation occurs at Asn-195. A helical transmembrane segment spans residues 218–238 (WMTGSVFVAPVVILGTCYGFI). The Cytoplasmic segment spans residues 239 to 293 (CYHIWRKVRGKTAGRQGGPAEGAGESALYRGVLHARCVSSVKTISRAKIRTVKMT). A helical transmembrane segment spans residues 294-313 (FVIVTAYIVCWAPFFIIQMW). Residues 314-331 (SAWDKNFSWVESENPATA) lie on the Extracellular side of the membrane. A glycan (N-linked (GlcNAc...) asparagine) is linked at Asn-319. The chain crosses the membrane as a helical span at residues 332–351 (IPALLASLNSCCNPWIYMFF). Over 352-418 (SGHLLQDCAQ…KSIKFIPVST (67 aa)) the chain is Cytoplasmic. S-palmitoyl cysteine attachment occurs at residues Cys-365 and Cys-366. Residues 377 to 418 (GSDSMSRRQTSFTNNRSPTNSMGTWKDSPKSSKSIKFIPVST) form a disordered region. The segment covering 383-399 (RRQTSFTNNRSPTNSMG) has biased composition (polar residues). Position 404 is a phosphoserine (Ser-404).

The protein belongs to the G-protein coupled receptor 1 family. Vasopressin/oxytocin receptor subfamily.

It localises to the cell membrane. Functionally, receptor for arginine vasopressin. The activity of this receptor is mediated by G proteins which activate a phosphatidyl-inositol-calcium second messenger system. This is Vasopressin V1a receptor (AVPR1A) from Ovis aries (Sheep).